A 215-amino-acid chain; its full sequence is Probable nicotinate-nucleotide adenylyltransferase (215 aa).

This sequence belongs to the NadD family.

The catalysed reaction is nicotinate beta-D-ribonucleotide + ATP + H(+) = deamido-NAD(+) + diphosphate. It functions in the pathway cofactor biosynthesis; NAD(+) biosynthesis; deamido-NAD(+) from nicotinate D-ribonucleotide: step 1/1. Catalyzes the reversible adenylation of nicotinate mononucleotide (NaMN) to nicotinic acid adenine dinucleotide (NaAD). The polypeptide is Probable nicotinate-nucleotide adenylyltransferase (Shewanella putrefaciens (strain CN-32 / ATCC BAA-453)).